The chain runs to 811 residues: Actin filament-associated protein 1-like 2 (811 aa).

2 disordered regions span residues K67–K110 and E132–Q168. The 97-residue stretch at D181–G277 folds into the PH 1 domain. Positions Q294–I326 are disordered. Positions P299 to G309 are enriched in basic and acidic residues. The PH 2 domain maps to A359–G453. Disordered regions lie at residues R500 to E532 and L558 to V631. Basic and acidic residues-rich tracts occupy residues D521–E532, V566–R577, and R622–V631. The stretch at L642–G737 forms a coiled coil.

As to quaternary structure, interacts with src.

It is found in the cytoplasm. In terms of biological role, may play a role in a signaling cascade by enhancing the kinase activity of src. Contributes to src-regulated transcription activation. The polypeptide is Actin filament-associated protein 1-like 2 (afap1l2) (Xenopus laevis (African clawed frog)).